The primary structure comprises 525 residues: G patch domain-containing protein 3 (525 aa).

The segment at 264 to 316 (YLADIPASPCGEPEEEVGKEEEEESHSDEDDDRGEEWERHEALHEDVTGQERT) is disordered. Positions 275–298 (EPEEEVGKEEEEESHSDEDDDRGE) are enriched in acidic residues. Residues 299 to 316 (EWERHEALHEDVTGQERT) are compositionally biased toward basic and acidic residues. The region spanning 410 to 458 (TKGIGRKVMERQGWAEGQGLGCRCSGVPEALDSDGQHPRCKRGLGYHGE) is the G-patch domain.

In terms of assembly, interacts with mitochondrial MAVS; the interaction is markedly increased upon viral infection. In terms of tissue distribution, expressed in ocular tissues including retinal pigment epithelium, cornea, ciliary muscle and non-pigmented ciliary epithelium. Also expressed in optic nerve, cartilage, skin and lymph node.

It localises to the nucleus. The protein localises to the cytoplasm. Involved in transcriptional regulation. It is able to activate transcription from the CXCR4 promoter and therefore it might control neural crest cell migration involved in ocular and craniofacial development. Is a negative regulator of immune antiviral response, acting via down-regulation of RIG-I-like receptors signaling and inhibition of type I interferon production. The control mechanism involves interaction with mitochondrial MAVS and inhibition of MAVS assembly with downstream proteins implicated in antiviral response, such as TBK1 and TRAF6. The sequence is that of G patch domain-containing protein 3 (GPATCH3) from Homo sapiens (Human).